A 900-amino-acid polypeptide reads, in one-letter code: Bifunctional uridylyltransferase/uridylyl-removing enzyme (900 aa).

The uridylyltransferase stretch occupies residues 1-342; that stretch reads MPQVDPELFD…WEGESGPIVP (342 aa). The segment at 343 to 705 is uridylyl-removing; the sequence is LNSRFQVRDG…TTQREFEGGT (363 aa). An HD domain is found at 461 to 583; it reads VDAHTLNVIK…VGDETHLDYL (123 aa). 2 consecutive ACT domains span residues 706–789 and 816–896; these read QIFI…IIQR and ILEI…PSPS.

The protein belongs to the GlnD family. Mg(2+) is required as a cofactor.

The catalysed reaction is [protein-PII]-L-tyrosine + UTP = [protein-PII]-uridylyl-L-tyrosine + diphosphate. It carries out the reaction [protein-PII]-uridylyl-L-tyrosine + H2O = [protein-PII]-L-tyrosine + UMP + H(+). Uridylyltransferase (UTase) activity is inhibited by glutamine, while glutamine activates uridylyl-removing (UR) activity. Modifies, by uridylylation and deuridylylation, the PII regulatory proteins (GlnB and homologs), in response to the nitrogen status of the cell that GlnD senses through the glutamine level. Under low glutamine levels, catalyzes the conversion of the PII proteins and UTP to PII-UMP and PPi, while under higher glutamine levels, GlnD hydrolyzes PII-UMP to PII and UMP (deuridylylation). Thus, controls uridylylation state and activity of the PII proteins, and plays an important role in the regulation of nitrogen fixation and metabolism. This is Bifunctional uridylyltransferase/uridylyl-removing enzyme from Stutzerimonas stutzeri (strain A1501) (Pseudomonas stutzeri).